The primary structure comprises 97 residues: Nucleoid-associated protein HPP12_0031 (97 aa).

The protein belongs to the YbaB/EbfC family. As to quaternary structure, homodimer.

It is found in the cytoplasm. Its subcellular location is the nucleoid. In terms of biological role, binds to DNA and alters its conformation. May be involved in regulation of gene expression, nucleoid organization and DNA protection. The polypeptide is Nucleoid-associated protein HPP12_0031 (Helicobacter pylori (strain P12)).